The chain runs to 230 residues: MEGQRWLPLEANPEVTNQFLKQLGLHPNWQFVDVYGMDPELLSMVPRPVCAVLLLFPITEKYEVFRTEEEEKIKSQGQDVTSSVYFMKQTISNACGTIGLIHAIANNKDKMHFESGSTLKKFLEESVSMSPEERARYLENYDAIRVTHETSAHEGQTEAPSIDEKVDLHFIALVHVDGHLYELDGRKPFPINHGETSDETLLEDAIEVCKKFMERDPDELRFNAIALSAA.

The region spanning 5–229 is the UCH catalytic domain; sequence RWLPLEANPE…LRFNAIALSA (225 aa). The tract at residues 8 to 13 is interaction with ubiquitin; it reads PLEANP. The active-site Nucleophile is the cysteine 95. A Phosphoserine modification is found at serine 130. Residues 152–159 form an interaction with ubiquitin. Crossover loop which restricts access of large ubiquitin adducts to the active site region; sequence AHEGQTEA. The active-site Proton donor is histidine 169. The interaction with ubiquitin stretch occupies residues 219-224; it reads ELRFNA.

This sequence belongs to the peptidase C12 family. As to quaternary structure, preferentially binds diubiquitin; the interaction does not hydrolyze diubiquitin but, in vitro, inhibits the hydrolyzing activity on other substrates. Highly expressed in heart, skeletal muscle, and testis.

It is found in the cytoplasm. The enzyme catalyses Thiol-dependent hydrolysis of ester, thioester, amide, peptide and isopeptide bonds formed by the C-terminal Gly of ubiquitin (a 76-residue protein attached to proteins as an intracellular targeting signal).. Inhibited by monoubiquitin and diubiquitin. Its function is as follows. Deubiquitinating enzyme (DUB) that controls levels of cellular ubiquitin through processing of ubiquitin precursors and ubiquitinated proteins. Thiol protease that recognizes and hydrolyzes a peptide bond at the C-terminal glycine of either ubiquitin or NEDD8. Has a 10-fold preference for Arg and Lys at position P3'', and exhibits a preference towards 'Lys-48'-linked ubiquitin chains. Deubiquitinates ENAC in apical compartments, thereby regulating apical membrane recycling. Indirectly increases the phosphorylation of IGFIR, AKT and FOXO1 and promotes insulin-signaling and insulin-induced adipogenesis. Required for stress-response retinal, skeletal muscle and germ cell maintenance. May be involved in working memory. Can hydrolyze UBB(+1), a mutated form of ubiquitin which is not effectively degraded by the proteasome and is associated with neurogenerative disorders. In Homo sapiens (Human), this protein is Ubiquitin carboxyl-terminal hydrolase isozyme L3 (UCHL3).